We begin with the raw amino-acid sequence, 150 residues long: Cytochrome c oxidase subunit 5A, mitochondrial (150 aa).

A mitochondrion-targeting transit peptide spans 1-41 (MLGAALRRCAVAATTRAGPRGLLHSARTPGPAAAIQSVRCY). The SIFI-degron motif lies at 2–17 (LGAALRRCAVAATTRA). N6-acetyllysine is present on residues Lys-87 and Lys-113. At Thr-141 the chain carries Phosphothreonine.

The protein belongs to the cytochrome c oxidase subunit 5A family. As to quaternary structure, component of the cytochrome c oxidase (complex IV, CIV), a multisubunit enzyme composed of 14 subunits. The complex is composed of a catalytic core of 3 subunits MT-CO1, MT-CO2 and MT-CO3, encoded in the mitochondrial DNA, and 11 supernumerary subunits COX4I, COX5A, COX5B, COX6A, COX6B, COX6C, COX7A, COX7B, COX7C, COX8 and NDUFA4, which are encoded in the nuclear genome. The complex exists as a monomer or a dimer and forms supercomplexes (SCs) in the inner mitochondrial membrane with NADH-ubiquinone oxidoreductase (complex I, CI) and ubiquinol-cytochrome c oxidoreductase (cytochrome b-c1 complex, complex III, CIII), resulting in different assemblies (supercomplex SCI(1)III(2)IV(1) and megacomplex MCI(2)III(2)IV(2)). Interacts with AFG1L. Interacts with RAB5IF. In terms of processing, in response to mitochondrial stress, the precursor protein is ubiquitinated by the SIFI complex in the cytoplasm before mitochondrial import, leading to its degradation. Within the SIFI complex, UBR4 initiates ubiquitin chain that are further elongated or branched by KCMF1.

The protein resides in the mitochondrion inner membrane. The protein operates within energy metabolism; oxidative phosphorylation. Functionally, component of the cytochrome c oxidase, the last enzyme in the mitochondrial electron transport chain which drives oxidative phosphorylation. The respiratory chain contains 3 multisubunit complexes succinate dehydrogenase (complex II, CII), ubiquinol-cytochrome c oxidoreductase (cytochrome b-c1 complex, complex III, CIII) and cytochrome c oxidase (complex IV, CIV), that cooperate to transfer electrons derived from NADH and succinate to molecular oxygen, creating an electrochemical gradient over the inner membrane that drives transmembrane transport and the ATP synthase. Cytochrome c oxidase is the component of the respiratory chain that catalyzes the reduction of oxygen to water. Electrons originating from reduced cytochrome c in the intermembrane space (IMS) are transferred via the dinuclear copper A center (CU(A)) of subunit 2 and heme A of subunit 1 to the active site in subunit 1, a binuclear center (BNC) formed by heme A3 and copper B (CU(B)). The BNC reduces molecular oxygen to 2 water molecules using 4 electrons from cytochrome c in the IMS and 4 protons from the mitochondrial matrix. This Gorilla gorilla gorilla (Western lowland gorilla) protein is Cytochrome c oxidase subunit 5A, mitochondrial (COX5A).